Reading from the N-terminus, the 293-residue chain is Exosome complex component RRP4 (293 aa).

The disordered stretch occupies residues 1–20; the sequence is MALEMRLPKARKPLSESLGR. The region spanning 79–159 is the S1 motif domain; it reads EVGDIVVGRI…SDGAVSLHTR (81 aa). At serine 124 the chain carries Phosphoserine.

This sequence belongs to the RRP4 family. In terms of assembly, component of the RNA exosome core complex (Exo-9), composed of EXOSC1, EXOSC2, EXOSC3, EXOSC4, EXOSC5, EXOSC6, EXOSC7, EXOSC8 and EXOSC9; within the complex interacts with EXOSC4 and EXOSC7. The catalytically inactive RNA exosome core complex (Exo-9) associates with the catalytic subunit EXOSC10/RRP6. Exo-9 may associate with DIS3 to form the nucleolar exosome complex, or DIS3L to form the cytoplasmic exosome complex. Exo-9 is formed by a hexameric base ring consisting of the heterodimers EXOSC4-EXOSC9, EXOSC5-EXOSC8 and EXOSC6-EXOSC7, and a cap ring consisting of EXOSC1, EXOSC2 and EXOSC3. The RNA exosome complex associates with cofactors C1D/RRP47, MPHOSPH6/MPP6 and MTREX/MTR4. Interacts with GTPBP1. Interacts with ZFP36L1 (via N-terminus).

It is found in the cytoplasm. Its subcellular location is the nucleus. The protein localises to the nucleolus. Its function is as follows. Non-catalytic component of the RNA exosome complex which has 3'-&gt;5' exoribonuclease activity and participates in a multitude of cellular RNA processing and degradation events. In the nucleus, the RNA exosome complex is involved in proper maturation of stable RNA species such as rRNA, snRNA and snoRNA, in the elimination of RNA processing by-products and non-coding 'pervasive' transcripts, such as antisense RNA species and promoter-upstream transcripts (PROMPTs), and of mRNAs with processing defects, thereby limiting or excluding their export to the cytoplasm. The RNA exosome may be involved in Ig class switch recombination (CSR) and/or Ig variable region somatic hypermutation (SHM) by targeting AICDA deamination activity to transcribed dsDNA substrates. In the cytoplasm, the RNA exosome complex is involved in general mRNA turnover and specifically degrades inherently unstable mRNAs containing AU-rich elements (AREs) within their 3' untranslated regions, and in RNA surveillance pathways, preventing translation of aberrant mRNAs. It seems to be involved in degradation of histone mRNA. The catalytic inactive RNA exosome core complex of 9 subunits (Exo-9) is proposed to play a pivotal role in the binding and presentation of RNA for ribonucleolysis, and to serve as a scaffold for the association with catalytic subunits and accessory proteins or complexes. EXOSC2 as peripheral part of the Exo-9 complex stabilizes the hexameric ring of RNase PH-domain subunits through contacts with EXOSC4 and EXOSC7. This is Exosome complex component RRP4 (Exosc2) from Mus musculus (Mouse).